A 149-amino-acid polypeptide reads, in one-letter code: Natriuretic peptides A (149 aa).

An N-terminal signal peptide occupies residues 1–23; sequence MGSPIAASFLLFLAVQLLGQTGA. Propeptides lie at residues 24 to 121 and 91 to 101; these read NPVY…AAPR and DGGALGRSPWD. Residues 49–103 form a disordered region; the sequence is MPLEDEAESPQALSEQNAEAGAALSPLPEVPPWTGEVSPAQRDGGALGRSPWDSS. Phosphoserine is present on S127. A disulfide bond links C128 and C144. The tract at residues 145–149 is important for degradation of atrial natriuretic peptide by IDE; the sequence is NSFRY.

This sequence belongs to the natriuretic peptide family. Homodimer; disulfide-linked antiparallel dimer. In terms of processing, the precursor molecule is proteolytically cleaved by CORIN at Arg-121 to produce the atrial natriuretic peptide. Undergoes further proteolytic cleavage by unknown proteases to give rise to long-acting natriuretic peptide, vessel dilator and kaliuretic peptide. Additional processing gives rise to the auriculin and atriopeptin peptides. In the kidneys, alternative processing by an unknown protease results in the peptide urodilatin. Post-translationally, cleavage by MME initiates degradation of the factor and thereby regulates its activity. Degradation by IDE results in reduced activation of NPR1 (in vitro). During IDE degradation, the resulting products can temporarily stimulate NPR2 to produce cGMP, before the fragments are completely degraded and inactivated by IDE (in vitro). Degraded by IDE. In terms of processing, phosphorylation on Ser-127 decreases vasorelaxant activity.

The protein localises to the secreted. It is found in the perikaryon. Its subcellular location is the cell projection. In terms of biological role, hormone that plays a key role in mediating cardio-renal homeostasis, and is involved in vascular remodeling and regulating energy metabolism. Acts by specifically binding and stimulating NPR1 to produce cGMP, which in turn activates effector proteins, such as PRKG1, that drive various biological responses. Regulates vasodilation, natriuresis, diuresis and aldosterone synthesis and is therefore essential for regulating blood pressure, controlling the extracellular fluid volume and maintaining the fluid-electrolyte balance. Also involved in inhibiting cardiac remodeling and cardiac hypertrophy by inducing cardiomyocyte apoptosis and attenuating the growth of cardiomyocytes and fibroblasts. Plays a role in female pregnancy by promoting trophoblast invasion and spiral artery remodeling in uterus, and thus prevents pregnancy-induced hypertension. In adipose tissue, acts in various cGMP- and PKG-dependent pathways to regulate lipid metabolism and energy homeostasis. This includes up-regulating lipid metabolism and mitochondrial oxygen utilization by activating the AMP-activated protein kinase (AMPK), and increasing energy expenditure by acting via MAPK11 to promote the UCP1-dependent thermogenesis of brown adipose tissue. Binds the clearance receptor NPR3 which removes the hormone from circulation. Its function is as follows. May have a role in cardio-renal homeostasis through regulation of natriuresis, diuresis, vasodilation, and inhibiting aldosterone synthesis. In vitro, promotes the production of cGMP and induces vasodilation. May promote natriuresis, at least in part, by enhancing prostaglandin E2 synthesis resulting in the inhibition of renal Na+-K+-ATPase. However reports on the involvement of this peptide in mammal blood volume and blood pressure homeostasis are conflicting; according to a report, in vivo it is not sufficient to activate cGMP and does not inhibit collecting duct transport nor effect diuresis and natriuresis. Appears to bind to specific receptors that are distinct from the receptors bound by atrial natriuretic peptide and vessel dilator. Possibly enhances protein excretion in urine by decreasing proximal tubular protein reabsorption. May have a role in cardio-renal homeostasis through regulation of natriuresis, diuresis, and vasodilation. In vitro, promotes the production of cGMP and induces vasodilation. May promote natriuresis, at least in part, by enhancing prostaglandin E2 synthesis resulting in the inhibition of renal Na+-K+-ATPase. However reports on the involvement of this peptide in mammal blood volume and blood pressure homeostasis are conflicting; according to a report it is not sufficient to activate cGMP and does not inhibit collecting duct transport nor effect diuresis and natriuresis. Appears to bind to specific receptors that are distinct from the receptors bound by the atrial natriuretic and long-acting natriuretic peptides. Possibly functions in protein excretion in urine by maintaining the integrity of the proximal tubules and enhancing protein excretion by decreasing proximal tubular protein reabsorption. Functionally, may have a role in cardio-renal homeostasis through regulation of diuresis and inhibiting aldosterone synthesis. In vitro, promotes the production of cGMP and induces vasodilation. May promote natriuresis, at least in part, by enhancing prostaglandin E2 synthesis resulting in the inhibition of renal Na+-K+-ATPase. May have a role in potassium excretion but not sodium excretion (natriuresis). Possibly enhances protein excretion in urine by decreasing proximal tubular protein reabsorption. In terms of biological role, hormone produced in the kidneys that appears to be important for maintaining cardio-renal homeostasis. Mediates vasodilation, natriuresis and diuresis primarily in the renal system, in order to maintain the extracellular fluid volume and control the fluid-electrolyte balance. Specifically binds and stimulates cGMP production by renal transmembrane receptors, likely NPR1. Urodilatin not ANP, may be the natriuretic peptide responsible for the regulation of sodium and water homeostasis in the kidney. Its function is as follows. May have a role in cardio-renal homeostasis through regulation of natriuresis and vasodilation. In vivo promotes natriuresis and in vitro, vasodilates renal artery strips. May have a role in cardio-renal homeostasis through regulation of regulation of natriuresis and vasodilation. In vivo promotes natriuresis. In vitro, vasodilates intestinal smooth muscle but not smooth muscle strips. Functionally, may have a role in cardio-renal homeostasis through regulation of natriuresis and vasodilation. In vivo promotes natriuresis. In vitro, selectively vasodilates intestinal and vascular smooth muscle strips. In terms of biological role, may have a role in cardio-renal homeostasis through regulation of natriuresis and vasodilation. In vivo promotes natriuresis. In vitro, selectively vasodilates intestinal smooth muscle but not vascular smooth muscle strips. This Canis lupus familiaris (Dog) protein is Natriuretic peptides A (NPPA).